A 141-amino-acid chain; its full sequence is Acetyltransferase YpeA (141 aa).

One can recognise an N-acetyltransferase domain in the interval methionine 1–tyrosine 141.

The protein belongs to the acetyltransferase family. YpeA subfamily.

This is Acetyltransferase YpeA (ypeA) from Escherichia coli (strain K12).